We begin with the raw amino-acid sequence, 268 residues long: Tryptophan synthase alpha chain (268 aa).

Residues glutamate 49 and aspartate 60 each act as proton acceptor in the active site.

The protein belongs to the TrpA family. As to quaternary structure, tetramer of two alpha and two beta chains.

It catalyses the reaction (1S,2R)-1-C-(indol-3-yl)glycerol 3-phosphate + L-serine = D-glyceraldehyde 3-phosphate + L-tryptophan + H2O. It participates in amino-acid biosynthesis; L-tryptophan biosynthesis; L-tryptophan from chorismate: step 5/5. In terms of biological role, the alpha subunit is responsible for the aldol cleavage of indoleglycerol phosphate to indole and glyceraldehyde 3-phosphate. The protein is Tryptophan synthase alpha chain of Photorhabdus laumondii subsp. laumondii (strain DSM 15139 / CIP 105565 / TT01) (Photorhabdus luminescens subsp. laumondii).